We begin with the raw amino-acid sequence, 431 residues long: Phosphomethylpyrimidine synthase (431 aa).

Residues asparagine 66, methionine 95, tyrosine 124, histidine 163, 185–187 (SRG), 226–229 (DGLR), and glutamate 265 contribute to the substrate site. Zn(2+) is bound at residue histidine 269. Tyrosine 292 is a binding site for substrate. Residue histidine 333 coordinates Zn(2+). [4Fe-4S] cluster is bound by residues cysteine 408, cysteine 411, and cysteine 415.

This sequence belongs to the ThiC family. [4Fe-4S] cluster serves as cofactor.

The enzyme catalyses 5-amino-1-(5-phospho-beta-D-ribosyl)imidazole + S-adenosyl-L-methionine = 4-amino-2-methyl-5-(phosphooxymethyl)pyrimidine + CO + 5'-deoxyadenosine + formate + L-methionine + 3 H(+). It functions in the pathway cofactor biosynthesis; thiamine diphosphate biosynthesis. Its function is as follows. Catalyzes the synthesis of the hydroxymethylpyrimidine phosphate (HMP-P) moiety of thiamine from aminoimidazole ribotide (AIR) in a radical S-adenosyl-L-methionine (SAM)-dependent reaction. In Dehalococcoides mccartyi (strain CBDB1), this protein is Phosphomethylpyrimidine synthase.